We begin with the raw amino-acid sequence, 118 residues long: Mating-type P-specific polypeptide Pc (118 aa).

The HMG box DNA-binding region spans 29-97 (KTTIYKNGFM…VRRQIAKLER (69 aa)).

Its subcellular location is the nucleus. Its function is as follows. Mating type proteins are sequence specific DNA-binding proteins that act as master switches in yeast differentiation by controlling gene expression in a cell type-specific fashion. Required for conjugation and efficient meiosis. The sequence is that of Mating-type P-specific polypeptide Pc (mat2-Pc) from Schizosaccharomyces pombe (Fission yeast).